Here is a 331-residue protein sequence, read N- to C-terminus: Ketol-acid reductoisomerase (NADP(+)) (331 aa).

Residues 2-181 (TKVYYEDAVK…GATRAGVIET (180 aa)) enclose the KARI N-terminal Rossmann domain. NADP(+)-binding positions include 25-28 (YGSQ), arginine 48, serine 52, and 82-85 (DETQ). Residue histidine 107 is part of the active site. Position 133 (glycine 133) interacts with NADP(+). One can recognise a KARI C-terminal knotted domain in the interval 182–327 (TFKEETETDL…AELREMMPFV (146 aa)). Residues aspartate 190, glutamate 194, glutamate 226, and glutamate 230 each contribute to the Mg(2+) site. A substrate-binding site is contributed by serine 251.

Belongs to the ketol-acid reductoisomerase family. The cofactor is Mg(2+).

It catalyses the reaction (2R)-2,3-dihydroxy-3-methylbutanoate + NADP(+) = (2S)-2-acetolactate + NADPH + H(+). The enzyme catalyses (2R,3R)-2,3-dihydroxy-3-methylpentanoate + NADP(+) = (S)-2-ethyl-2-hydroxy-3-oxobutanoate + NADPH + H(+). It participates in amino-acid biosynthesis; L-isoleucine biosynthesis; L-isoleucine from 2-oxobutanoate: step 2/4. Its pathway is amino-acid biosynthesis; L-valine biosynthesis; L-valine from pyruvate: step 2/4. Functionally, involved in the biosynthesis of branched-chain amino acids (BCAA). Catalyzes an alkyl-migration followed by a ketol-acid reduction of (S)-2-acetolactate (S2AL) to yield (R)-2,3-dihydroxy-isovalerate. In the isomerase reaction, S2AL is rearranged via a Mg-dependent methyl migration to produce 3-hydroxy-3-methyl-2-ketobutyrate (HMKB). In the reductase reaction, this 2-ketoacid undergoes a metal-dependent reduction by NADPH to yield (R)-2,3-dihydroxy-isovalerate. This chain is Ketol-acid reductoisomerase (NADP(+)), found in Listeria innocua serovar 6a (strain ATCC BAA-680 / CLIP 11262).